Reading from the N-terminus, the 137-residue chain is Fluoride-specific ion channel FluC 2 (137 aa).

The next 4 membrane-spanning stretches (helical) occupy residues 3 to 23, 44 to 64, 76 to 96, and 111 to 131; these read MGGSFVVLSGVIAIVVGSVLG, WGTMTINVTGAFLIGIFGALA, PWLFAVTGFLGCYTTVSSFSL, and LGNVAFSVGLCLAAVSCGFLL. Na(+) contacts are provided by Gly-86 and Thr-89.

Belongs to the fluoride channel Fluc/FEX (TC 1.A.43) family.

The protein resides in the cell inner membrane. It carries out the reaction fluoride(in) = fluoride(out). Its activity is regulated as follows. Na(+) is not transported, but it plays an essential structural role and its presence is essential for fluoride channel function. Fluoride-specific ion channel. Important for reducing fluoride concentration in the cell, thus reducing its toxicity. This Bradyrhizobium diazoefficiens (strain JCM 10833 / BCRC 13528 / IAM 13628 / NBRC 14792 / USDA 110) protein is Fluoride-specific ion channel FluC 2.